A 458-amino-acid polypeptide reads, in one-letter code: Oxysterol-binding protein-related protein 3B (458 aa).

Disordered regions lie at residues Val47–Trp66, Asp370–Pro401, and Arg431–Thr458. Positions Gly375–Gly396 are enriched in basic and acidic residues. Residues Pro443 to Thr458 are compositionally biased toward polar residues.

Belongs to the OSBP family. Expressed in roots, leaves, stems and flowers.

Functionally, may be involved in the transport of sterols. This is Oxysterol-binding protein-related protein 3B (ORP3B) from Arabidopsis thaliana (Mouse-ear cress).